We begin with the raw amino-acid sequence, 188 residues long: Acireductone dioxygenase (188 aa).

Fe(2+) is bound by residues His97, His99, Glu103, and His141. His97, His99, Glu103, and His141 together coordinate Ni(2+).

The protein belongs to the acireductone dioxygenase (ARD) family. In terms of assembly, monomer. The cofactor is Fe(2+). Requires Ni(2+) as cofactor.

It catalyses the reaction 1,2-dihydroxy-5-(methylsulfanyl)pent-1-en-3-one + O2 = 3-(methylsulfanyl)propanoate + CO + formate + 2 H(+). It carries out the reaction 1,2-dihydroxy-5-(methylsulfanyl)pent-1-en-3-one + O2 = 4-methylsulfanyl-2-oxobutanoate + formate + 2 H(+). Its pathway is amino-acid biosynthesis; L-methionine biosynthesis via salvage pathway; L-methionine from S-methyl-5-thio-alpha-D-ribose 1-phosphate: step 5/6. Its function is as follows. Catalyzes 2 different reactions between oxygen and the acireductone 1,2-dihydroxy-3-keto-5-methylthiopentene (DHK-MTPene) depending upon the metal bound in the active site. Fe-containing acireductone dioxygenase (Fe-ARD) produces formate and 2-keto-4-methylthiobutyrate (KMTB), the alpha-ketoacid precursor of methionine in the methionine recycle pathway. Ni-containing acireductone dioxygenase (Ni-ARD) produces methylthiopropionate, carbon monoxide and formate, and does not lie on the methionine recycle pathway. In Xanthomonas axonopodis pv. citri (strain 306), this protein is Acireductone dioxygenase.